A 390-amino-acid chain; its full sequence is Precorrin-6Y C(5,15)-methyltransferase [decarboxylating] (390 aa).

This sequence belongs to the precorrin methyltransferase family.

It carries out the reaction precorrin-6B + 2 S-adenosyl-L-methionine = precorrin-8X + 2 S-adenosyl-L-homocysteine + CO2 + 3 H(+). The protein operates within cofactor biosynthesis; adenosylcobalamin biosynthesis; cob(II)yrinate a,c-diamide from precorrin-2 (aerobic route): step 7/10. In terms of biological role, catalyzes the methylation of both C-5 and C-15 in precorrin-6Y to form precorrin-8X. In Mycobacterium tuberculosis (strain ATCC 25618 / H37Rv), this protein is Precorrin-6Y C(5,15)-methyltransferase [decarboxylating] (cobL).